Here is an 86-residue protein sequence, read N- to C-terminus: RNA-binding protein Hfq (86 aa).

A Sm domain is found at Asp-9 to Ile-68.

Belongs to the Hfq family. As to quaternary structure, homohexamer.

RNA chaperone that binds small regulatory RNA (sRNAs) and mRNAs to facilitate mRNA translational regulation in response to envelope stress, environmental stress and changes in metabolite concentrations. Also binds with high specificity to tRNAs. In Pseudomonas fluorescens (strain Pf0-1), this protein is RNA-binding protein Hfq.